The primary structure comprises 758 residues: 1-phosphatidylinositol 4,5-bisphosphate phosphodiesterase delta-4 (758 aa).

A PH domain is found at 16-124 (QLMQAGSPMR…WIQGLEKLIE (109 aa)). The substrate binding stretch occupies residues 26 to 53 (KVKSRSWKKQRYFKLQEDCMTIWYNSKK). EF-hand domains lie at 134 to 169 (LMDQ…MNVD), 170 to 205 (MSEH…LTQR), and 206 to 237 (DEVL…GQLE). 10 residues coordinate Ca(2+): D147, N149, D151, R153, E158, D183, S185, S187, T189, and E194. A GBA motif is present at residues 213–243 (QDFSKDGKKLTLLEFVDFLQQGQLEEENTEE). One can recognise a PI-PLC X-box domain in the interval 290–435 (QDMMQPLCHY…LRGKILLKGK (146 aa)). H305 is an active-site residue. Positions 306, 335, and 337 each coordinate Ca(2+). The active site involves H350. Residue E384 participates in Ca(2+) binding. The substrate site is built by K433 and K435. Over residues 446 to 468 (EQPDDSLGEVSDEEENIEVEEER) the composition is skewed to acidic residues. Residues 446–479 (EQPDDSLGEVSDEEENIEVEEERNEDKKRAKKSK) form a disordered region. Positions 486–602 (LSDCVIYCKS…GYVLKPSFMR (117 aa)) constitute a PI-PLC Y-box domain. Positions 515 and 542 each coordinate substrate. In terms of domain architecture, C2 spans 602–731 (RHVETTFNPD…SGYRHIHLLS (130 aa)). Residues I645, D647, N671, D700, Y701, and D702 each contribute to the Ca(2+) site. The PDZ-binding signature appears at 726–729 (HIHL).

Ca(2+) serves as cofactor.

It is found in the membrane. The protein resides in the nucleus. Its subcellular location is the cytoplasm. The protein localises to the endoplasmic reticulum. The enzyme catalyses a 1,2-diacyl-sn-glycero-3-phospho-(1D-myo-inositol-4,5-bisphosphate) + H2O = 1D-myo-inositol 1,4,5-trisphosphate + a 1,2-diacyl-sn-glycerol + H(+). It catalyses the reaction a 1,2-diacyl-sn-glycero-3-phospho-(1D-myo-inositol) + H2O = 1D-myo-inositol 1-phosphate + a 1,2-diacyl-sn-glycerol + H(+). Its function is as follows. Hydrolyzes the phosphatidylinositol 4,5-bisphosphate (PIP2) to generate 2 second messenger molecules diacylglycerol (DAG) and inositol 1,4,5-trisphosphate (IP3). DAG mediates the activation of protein kinase C (PKC), while IP3 releases Ca(2+) from intracellular stores. The protein is 1-phosphatidylinositol 4,5-bisphosphate phosphodiesterase delta-4 (plcd4) of Xenopus laevis (African clawed frog).